A 404-amino-acid polypeptide reads, in one-letter code: G1/S-specific cyclin-E2 (404 aa).

The disordered stretch occupies residues M1–K41. The span at R7–I28 shows a compositional bias: polar residues. S21 is modified (phosphoserine). The residue at position 348 (K348) is an N6-lactoyllysine. S383 is subject to Phosphoserine. Phosphothreonine is present on T392.

It belongs to the cyclin family. Cyclin E subfamily. As to quaternary structure, interacts with the CDK2 (in vivo) and CDK3 (in vitro) protein kinases to form a serine/threonine kinase holoenzyme complex. The cyclin subunit imparts substrate specificity to the complex. In terms of processing, phosphorylation by CDK2 triggers its release from CDK2 and degradation via the ubiquitin proteasome pathway. Post-translationally, lactylated at Lys-348. Delactylated by SIRT3. In terms of tissue distribution, highest levels in adult testis, thymus and brain. Lower levels in placenta, spleen and colon.

It is found in the nucleus. Functionally, essential for the control of the cell cycle at the late G1 and early S phase. In Mus musculus (Mouse), this protein is G1/S-specific cyclin-E2 (Ccne2).